The primary structure comprises 245 residues: DnaJ homolog subfamily B member 6-B (245 aa).

The 67-residue stretch at 3-69 folds into the J domain; sequence EYYDVLGVQR…KKRDIYDKYG (67 aa).

As to quaternary structure, homooligomer.

It is found in the cytoplasm. The protein localises to the perinuclear region. The protein resides in the nucleus. Functionally, has a stimulatory effect on the ATPase activity of HSP70 in a dose-dependent and time-dependent manner and hence acts as a co-chaperone of HSP70. Plays an indispensable role in the organization of KRT8/KRT18 filaments. Acts as an endogenous molecular chaperone for neuronal proteins including huntingtin. Suppresses aggregation and toxicity of polyglutamine-containing, aggregation-prone proteins. Also reduces cellular toxicity and caspase-3 activity. The chain is DnaJ homolog subfamily B member 6-B (dnajb6-b) from Xenopus laevis (African clawed frog).